A 397-amino-acid polypeptide reads, in one-letter code: CCA-adding enzyme (397 aa).

Positions 8 and 11 each coordinate ATP. CTP contacts are provided by glycine 8 and arginine 11. Mg(2+)-binding residues include glutamate 21 and aspartate 23. Residues arginine 91, arginine 137, and arginine 140 each coordinate ATP. CTP is bound by residues arginine 91, arginine 137, and arginine 140. Positions 213 to 324 (NLDAAIATLK…LALFNGCDAW (112 aa)) constitute an HD domain.

Belongs to the tRNA nucleotidyltransferase/poly(A) polymerase family. Bacterial CCA-adding enzyme type 2 subfamily. Mg(2+) serves as cofactor.

It carries out the reaction a tRNA precursor + 2 CTP + ATP = a tRNA with a 3' CCA end + 3 diphosphate. The catalysed reaction is a tRNA with a 3' CCA end + 2 CTP + ATP = a tRNA with a 3' CCACCA end + 3 diphosphate. Functionally, catalyzes the addition and repair of the essential 3'-terminal CCA sequence in tRNAs without using a nucleic acid template. Adds these three nucleotides in the order of C, C, and A to the tRNA nucleotide-73, using CTP and ATP as substrates and producing inorganic pyrophosphate. tRNA 3'-terminal CCA addition is required both for tRNA processing and repair. Also involved in tRNA surveillance by mediating tandem CCA addition to generate a CCACCA at the 3' terminus of unstable tRNAs. While stable tRNAs receive only 3'-terminal CCA, unstable tRNAs are marked with CCACCA and rapidly degraded. The protein is CCA-adding enzyme of Alteromonas mediterranea (strain DSM 17117 / CIP 110805 / LMG 28347 / Deep ecotype).